Reading from the N-terminus, the 151-residue chain is MRHGVSGRKLNRATSHRLAMFRNMVTSLLQHERIFTTLPKAKELRRWADWMISLGKRGDLHARRQVMACVREKETVQKIFAELGPRYQSRPGGYTRIVKAGYRRGDASPMCLIELITEAKQPPRKEKAKKPAPVQAEEASATPASEEKAQD.

Residues 118 to 151 form a disordered region; the sequence is EAKQPPRKEKAKKPAPVQAEEASATPASEEKAQD. The span at 131 to 144 shows a compositional bias: low complexity; the sequence is PAPVQAEEASATPA.

It belongs to the bacterial ribosomal protein bL17 family. Part of the 50S ribosomal subunit. Contacts protein L32.

The polypeptide is Large ribosomal subunit protein bL17 (Syntrophobacter fumaroxidans (strain DSM 10017 / MPOB)).